Consider the following 212-residue polypeptide: Putative protein phosphatase 2C 53 (212 aa).

Residues 1–208 (MEDRFSAITN…DDISVMLIPL (208 aa)) enclose the PPM-type phosphatase domain. Asp199 is a binding site for Mn(2+).

The protein belongs to the PP2C family. Mg(2+) is required as a cofactor. Mn(2+) serves as cofactor.

The catalysed reaction is O-phospho-L-seryl-[protein] + H2O = L-seryl-[protein] + phosphate. It catalyses the reaction O-phospho-L-threonyl-[protein] + H2O = L-threonyl-[protein] + phosphate. This chain is Putative protein phosphatase 2C 53, found in Arabidopsis thaliana (Mouse-ear cress).